The primary structure comprises 160 residues: Transcription elongation factor GreA (160 aa).

Residues 49 to 73 (HAAKEEQSHNEGRIADLEDKLARAD) are a coiled coil.

Belongs to the GreA/GreB family.

Necessary for efficient RNA polymerase transcription elongation past template-encoded arresting sites. The arresting sites in DNA have the property of trapping a certain fraction of elongating RNA polymerases that pass through, resulting in locked ternary complexes. Cleavage of the nascent transcript by cleavage factors such as GreA or GreB allows the resumption of elongation from the new 3'terminus. GreA releases sequences of 2 to 3 nucleotides. This is Transcription elongation factor GreA from Rhodopseudomonas palustris (strain BisA53).